A 263-amino-acid chain; its full sequence is Small ribosomal subunit protein eS4 (263 aa).

One can recognise an S4 RNA-binding domain in the interval 42-104; sequence LPLIIFLRNR…TGENFRLIYD (63 aa).

The protein belongs to the eukaryotic ribosomal protein eS4 family.

The sequence is that of Small ribosomal subunit protein eS4 (RPS4) from Bos taurus (Bovine).